The primary structure comprises 1488 residues: Chromosome partition protein MukB (1488 aa).

34-41 is an ATP binding site; the sequence is GGNGAGKS. 3 coiled-coil regions span residues 326–418, 444–472, and 509–602; these read LEAD…QYNQ, LDTF…QTAH, and RHLA…QRAP. The segment at 666 to 783 is flexible hinge; sequence PGGAEDQRLN…SLPIFGRAAR (118 aa). Coiled-coil stretches lie at residues 835–923, 977–1116, and 1209–1265; these read EAEI…AKLE, EMLS…AKAG, and VEAI…LQSV.

This sequence belongs to the SMC family. MukB subfamily. As to quaternary structure, homodimerization via its hinge domain. Binds to DNA via its C-terminal region. Interacts, and probably forms a ternary complex, with MukE and MukF via its C-terminal region. The complex formation is stimulated by calcium or magnesium. Interacts with tubulin-related protein FtsZ.

The protein resides in the cytoplasm. Its subcellular location is the nucleoid. Functionally, plays a central role in chromosome condensation, segregation and cell cycle progression. Functions as a homodimer, which is essential for chromosome partition. Involved in negative DNA supercoiling in vivo, and by this means organize and compact chromosomes. May achieve or facilitate chromosome segregation by condensation DNA from both sides of a centrally located replisome during cell division. The polypeptide is Chromosome partition protein MukB (Salmonella paratyphi B (strain ATCC BAA-1250 / SPB7)).